Consider the following 359-residue polypeptide: DNA polymerase IV (359 aa).

A UmuC domain is found at 4-184 (IVHVDMDAFY…LKVNRIPGVG (181 aa)). Mg(2+)-binding residues include Asp-8 and Asp-102. Residue Glu-103 is part of the active site.

Belongs to the DNA polymerase type-Y family. In terms of assembly, monomer. Mg(2+) serves as cofactor.

The protein localises to the cytoplasm. The enzyme catalyses DNA(n) + a 2'-deoxyribonucleoside 5'-triphosphate = DNA(n+1) + diphosphate. In terms of biological role, poorly processive, error-prone DNA polymerase involved in untargeted mutagenesis. Copies undamaged DNA at stalled replication forks, which arise in vivo from mismatched or misaligned primer ends. These misaligned primers can be extended by PolIV. Exhibits no 3'-5' exonuclease (proofreading) activity. May be involved in translesional synthesis, in conjunction with the beta clamp from PolIII. The protein is DNA polymerase IV of Xanthomonas axonopodis pv. citri (strain 306).